Here is a 103-residue protein sequence, read N- to C-terminus: Large ribosomal subunit protein uL24 (103 aa).

It belongs to the universal ribosomal protein uL24 family. Part of the 50S ribosomal subunit.

In terms of biological role, one of two assembly initiator proteins, it binds directly to the 5'-end of the 23S rRNA, where it nucleates assembly of the 50S subunit. One of the proteins that surrounds the polypeptide exit tunnel on the outside of the subunit. This is Large ribosomal subunit protein uL24 from Dehalococcoides mccartyi (strain ATCC BAA-2100 / JCM 16839 / KCTC 5957 / BAV1).